A 68-amino-acid chain; its full sequence is Large ribosomal subunit protein bL31 (68 aa).

Residues C16, C18, C36, and C39 each contribute to the Zn(2+) site.

Belongs to the bacterial ribosomal protein bL31 family. Type A subfamily. In terms of assembly, part of the 50S ribosomal subunit. Zn(2+) serves as cofactor.

Its function is as follows. Binds the 23S rRNA. In Lachnospira eligens (strain ATCC 27750 / DSM 3376 / VPI C15-48 / C15-B4) (Eubacterium eligens), this protein is Large ribosomal subunit protein bL31.